The primary structure comprises 197 residues: Holliday junction branch migration complex subunit RuvA (197 aa).

The tract at residues 1-64 is domain I; sequence MIARLAGKVA…QDAIELYGFA (64 aa). Residues 65 to 141 form a domain II region; sequence SEDEEAVFRA…LALLARAAGP (77 aa). Residues 141-145 are flexible linker; that stretch reads PARAK. The domain III stretch occupies residues 146 to 197; sequence PGAGVVEQLRQALVNLGYKPPQADAAADALRDEAEGKKLDELLREALKRLRG.

The protein belongs to the RuvA family. Homotetramer. Forms an RuvA(8)-RuvB(12)-Holliday junction (HJ) complex. HJ DNA is sandwiched between 2 RuvA tetramers; dsDNA enters through RuvA and exits via RuvB. An RuvB hexamer assembles on each DNA strand where it exits the tetramer. Each RuvB hexamer is contacted by two RuvA subunits (via domain III) on 2 adjacent RuvB subunits; this complex drives branch migration. In the full resolvosome a probable DNA-RuvA(4)-RuvB(12)-RuvC(2) complex forms which resolves the HJ.

It is found in the cytoplasm. Functionally, the RuvA-RuvB-RuvC complex processes Holliday junction (HJ) DNA during genetic recombination and DNA repair, while the RuvA-RuvB complex plays an important role in the rescue of blocked DNA replication forks via replication fork reversal (RFR). RuvA specifically binds to HJ cruciform DNA, conferring on it an open structure. The RuvB hexamer acts as an ATP-dependent pump, pulling dsDNA into and through the RuvAB complex. HJ branch migration allows RuvC to scan DNA until it finds its consensus sequence, where it cleaves and resolves the cruciform DNA. The protein is Holliday junction branch migration complex subunit RuvA of Anaeromyxobacter sp. (strain Fw109-5).